A 425-amino-acid polypeptide reads, in one-letter code: Serine--tRNA ligase (425 aa).

231 to 233 (TAE) is an L-serine binding site. Residue 262-264 (RSE) participates in ATP binding. Glu285 is a binding site for L-serine. Residue 349-352 (EISS) coordinates ATP. An L-serine-binding site is contributed by Ser385.

It belongs to the class-II aminoacyl-tRNA synthetase family. Type-1 seryl-tRNA synthetase subfamily. As to quaternary structure, homodimer. The tRNA molecule binds across the dimer.

It is found in the cytoplasm. The enzyme catalyses tRNA(Ser) + L-serine + ATP = L-seryl-tRNA(Ser) + AMP + diphosphate + H(+). It catalyses the reaction tRNA(Sec) + L-serine + ATP = L-seryl-tRNA(Sec) + AMP + diphosphate + H(+). It functions in the pathway aminoacyl-tRNA biosynthesis; selenocysteinyl-tRNA(Sec) biosynthesis; L-seryl-tRNA(Sec) from L-serine and tRNA(Sec): step 1/1. Its function is as follows. Catalyzes the attachment of serine to tRNA(Ser). Is also able to aminoacylate tRNA(Sec) with serine, to form the misacylated tRNA L-seryl-tRNA(Sec), which will be further converted into selenocysteinyl-tRNA(Sec). The sequence is that of Serine--tRNA ligase from Bartonella quintana (strain Toulouse) (Rochalimaea quintana).